We begin with the raw amino-acid sequence, 1131 residues long: DNA polymerase II large subunit (1131 aa).

The protein belongs to the archaeal DNA polymerase II family. As to quaternary structure, heterodimer of a large subunit and a small subunit.

The enzyme catalyses DNA(n) + a 2'-deoxyribonucleoside 5'-triphosphate = DNA(n+1) + diphosphate. It catalyses the reaction Exonucleolytic cleavage in the 3'- to 5'-direction to yield nucleoside 5'-phosphates.. In terms of biological role, possesses two activities: a DNA synthesis (polymerase) and an exonucleolytic activity that degrades single-stranded DNA in the 3'- to 5'-direction. Has a template-primer preference which is characteristic of a replicative DNA polymerase. In Methanococcus maripaludis (strain C7 / ATCC BAA-1331), this protein is DNA polymerase II large subunit.